The chain runs to 340 residues: Citramalyl-CoA lyase, mitochondrial (340 aa).

The N-terminal 22 residues, 1-22, are a transit peptide targeting the mitochondrion; sequence MALRLLRRAARGAAAAALLRLK. Residues Y50, K57, and K61 each contribute to the substrate site. An N6-acetyllysine mark is found at K57 and K61. Residues K82 and K92 each carry the N6-acetyllysine; alternate modification. Residues K82 and K92 each carry the N6-succinyllysine; alternate modification. Residue R107 coordinates substrate. E171 and D206 together coordinate Mg(2+). 272–273 lines the substrate pocket; the sequence is IH. K309 carries the N6-succinyllysine modification. The active site involves D320.

Belongs to the HpcH/HpaI aldolase family. Citrate lyase beta subunit-like subfamily. As to quaternary structure, homotrimer. Requires Mg(2+) as cofactor.

It is found in the mitochondrion. It catalyses the reaction glyoxylate + acetyl-CoA + H2O = (S)-malate + CoA + H(+). The catalysed reaction is propanoyl-CoA + glyoxylate + H2O = 3-methylmalate + CoA + H(+). It carries out the reaction (3S)-citramalyl-CoA = pyruvate + acetyl-CoA. The enzyme catalyses (S)-malyl-CoA + H2O = (S)-malate + CoA + H(+). Its function is as follows. Mitochondrial citramalyl-CoA lyase indirectly involved in the vitamin B12 metabolism. Converts citramalyl-CoA into acetyl-CoA and pyruvate in the C5-dicarboxylate catabolism pathway. The C5-dicarboxylate catabolism pathway is required to detoxify itaconate, a vitamin B12-poisoning metabolite. Also acts as a malate synthase in vitro, converting glyoxylate and acetyl-CoA to malate. Also displays malyl-CoA thioesterase activity. Also acts as a beta-methylmalate synthase in vitro, by mediating conversion of glyoxylate and propionyl-CoA to beta-methylmalate. Also has very weak citramalate synthase activity in vitro. This Homo sapiens (Human) protein is Citramalyl-CoA lyase, mitochondrial.